A 101-amino-acid polypeptide reads, in one-letter code: Small ribosomal subunit protein uS14 (101 aa).

The protein belongs to the universal ribosomal protein uS14 family. Part of the 30S ribosomal subunit. Contacts proteins S3 and S10.

Functionally, binds 16S rRNA, required for the assembly of 30S particles and may also be responsible for determining the conformation of the 16S rRNA at the A site. The sequence is that of Small ribosomal subunit protein uS14 from Sodalis glossinidius (strain morsitans).